Reading from the N-terminus, the 546-residue chain is uncharacterized protein (546 aa).

Disordered stretches follow at residues 37-101 (KEND…NQKL), 269-300 (QNKAAADLRKTESHGTHSQSTPPQHSSSQPEV), and 392-443 (LSDL…TSAC). 2 stretches are compositionally biased toward basic and acidic residues: residues 81–93 (DDVKEKKHPENNQ) and 274–283 (ADLRKTESHG). Low complexity predominate over residues 284-298 (THSQSTPPQHSSSQP).

This is an uncharacterized protein from Homo sapiens (Human).